Reading from the N-terminus, the 115-residue chain is NAD(P)H-quinone oxidoreductase subunit M (115 aa).

The protein belongs to the complex I NdhM subunit family. NDH-1 can be composed of about 15 different subunits; different subcomplexes with different compositions have been identified which probably have different functions.

The protein localises to the cellular thylakoid membrane. The catalysed reaction is a plastoquinone + NADH + (n+1) H(+)(in) = a plastoquinol + NAD(+) + n H(+)(out). It carries out the reaction a plastoquinone + NADPH + (n+1) H(+)(in) = a plastoquinol + NADP(+) + n H(+)(out). NDH-1 shuttles electrons from an unknown electron donor, via FMN and iron-sulfur (Fe-S) centers, to quinones in the respiratory and/or the photosynthetic chain. The immediate electron acceptor for the enzyme in this species is believed to be plastoquinone. Couples the redox reaction to proton translocation, and thus conserves the redox energy in a proton gradient. Cyanobacterial NDH-1 also plays a role in inorganic carbon-concentration. The polypeptide is NAD(P)H-quinone oxidoreductase subunit M (Synechococcus sp. (strain CC9902)).